Reading from the N-terminus, the 443-residue chain is Serine--tRNA ligase (443 aa).

246-248 serves as a coordination point for L-serine; that stretch reads TAE. 277–279 is a binding site for ATP; sequence RAE. Residue E300 participates in L-serine binding. 367-370 provides a ligand contact to ATP; the sequence is EISS. Position 402 (S402) interacts with L-serine.

This sequence belongs to the class-II aminoacyl-tRNA synthetase family. Type-1 seryl-tRNA synthetase subfamily. As to quaternary structure, homodimer. The tRNA molecule binds across the dimer.

Its subcellular location is the cytoplasm. It carries out the reaction tRNA(Ser) + L-serine + ATP = L-seryl-tRNA(Ser) + AMP + diphosphate + H(+). It catalyses the reaction tRNA(Sec) + L-serine + ATP = L-seryl-tRNA(Sec) + AMP + diphosphate + H(+). It functions in the pathway aminoacyl-tRNA biosynthesis; selenocysteinyl-tRNA(Sec) biosynthesis; L-seryl-tRNA(Sec) from L-serine and tRNA(Sec): step 1/1. Catalyzes the attachment of serine to tRNA(Ser). Is also able to aminoacylate tRNA(Sec) with serine, to form the misacylated tRNA L-seryl-tRNA(Sec), which will be further converted into selenocysteinyl-tRNA(Sec). This Bradyrhizobium diazoefficiens (strain JCM 10833 / BCRC 13528 / IAM 13628 / NBRC 14792 / USDA 110) protein is Serine--tRNA ligase.